The primary structure comprises 844 residues: E3 ubiquitin-protein ligase BRE1-like 2 (844 aa).

Coiled-coil stretches lie at residues 1–38 (MDAA…RDEQ) and 160–240 (EDVI…QLQT). A disordered region spans residues 244-269 (SLMNTSAPNGVNGSVSTDKSSDKGMG). The span at 245–261 (LMNTSAPNGVNGSVSTD) shows a compositional bias: polar residues. 2 coiled-coil regions span residues 290-604 (ELHE…SEIE) and 640-670 (KMKQ…ESSK). The RING-type zinc finger occupies 792-831 (CGVCFDRPKEVVITKCFHLFCSPCIQRNLEIRHRKCPGCG).

Belongs to the BRE1 family.

It localises to the nucleus. The catalysed reaction is S-ubiquitinyl-[E2 ubiquitin-conjugating enzyme]-L-cysteine + [acceptor protein]-L-lysine = [E2 ubiquitin-conjugating enzyme]-L-cysteine + N(6)-ubiquitinyl-[acceptor protein]-L-lysine.. It functions in the pathway protein modification; protein ubiquitination. Its function is as follows. E3 ubiquitin-protein ligase that monoubiquitinates H2B to form H2BK143ub1. H2BK143ub1 gives a specific tag for epigenetic transcriptional activation and is also prerequisite for H3K4me and maybe H3K79me. It thereby plays a central role in histone code and gene regulation. Forms a ubiquitin ligase complex in cooperation with the E2 enzyme UBC2/RAD6. The chain is E3 ubiquitin-protein ligase BRE1-like 2 (BRE1B) from Oryza sativa subsp. indica (Rice).